A 547-amino-acid polypeptide reads, in one-letter code: Oncoprotein-induced transcript 3 protein (547 aa).

Residues Met1–Pro19 form the signal peptide. Residues Asn89 and Asn116 are each glycosylated (N-linked (GlcNAc...) asparagine). Residues Asp182–Glu222 form the EGF-like; calcium-binding domain. Disulfide bonds link Cys186-Cys197, Cys193-Cys206, and Cys208-Cys221. A ZP domain is found at Phe267–Arg516. Asn299 carries an N-linked (GlcNAc...) asparagine glycan. The disordered stretch occupies residues Glu520–Asp547.

The protein resides in the nucleus envelope. May be involved in hepatocellular function and development. The chain is Oncoprotein-induced transcript 3 protein (OIT3) from Bos taurus (Bovine).